The primary structure comprises 625 residues: ATP-dependent rRNA helicase spb4 (625 aa).

Positions 14-42 (WDALTPSLAEWILDAIKSMGFEKMTPVQA) match the Q motif motif. In terms of domain architecture, Helicase ATP-binding spans 45–246 (IPLFMGNKDV…RVGLRNPVKI (202 aa)). ATP is bound at residue 58-65 (AVTGSGKT). The short motif at 194-197 (DEAD) is the DEAD box element. The 159-residue stretch at 278–436 (ALLSLLSQLQ…TTDDAAKILI (159 aa)) folds into the Helicase C-terminal domain. The segment at 550–597 (KKQREAWSQKHEKQDLKELKREKKKRKREIERLDKMTDEEKRVEQEKE) is disordered. 2 stretches are compositionally biased toward basic and acidic residues: residues 553 to 570 (REAW…ELKR) and 577 to 597 (REIE…QEKE). Residues 557–614 (SQKHEKQDLKELKREKKKRKREIERLDKMTDEEKRVEQEKERELQALIEQVKRRKIED) adopt a coiled-coil conformation.

It belongs to the DEAD box helicase family. DDX55/SPB4 subfamily. In terms of assembly, component of pre-60S ribosomal complexes.

The protein resides in the nucleus. Its subcellular location is the nucleolus. The catalysed reaction is ATP + H2O = ADP + phosphate + H(+). In terms of biological role, ATP-binding RNA helicase involved in the biogenesis of 60S ribosomal subunits. Binds 90S pre-ribosomal particles and dissociates from pre-60S ribosomal particles after processing of 27SB pre-rRNA. Required for the normal formation of 18S rRNA through the processing of pre-rRNAs at sites A0, A1 and A2, and the normal formation of 25S and 5.8S rRNAs through the processing of pre-rRNAs at sites C1 and C2. This Sclerotinia sclerotiorum (strain ATCC 18683 / 1980 / Ss-1) (White mold) protein is ATP-dependent rRNA helicase spb4.